The following is a 721-amino-acid chain: Methionine--tRNA ligase (721 aa).

The 'HIGH' region signature appears at 27-37 (PYANGQIHIGH). Positions 158, 161, 171, and 174 each coordinate Zn(2+). Positions 348 to 352 (KMSKS) match the 'KMSKS' region motif. Lys-351 is an ATP binding site. The 107-residue stretch at 615–721 (DFAKIDLRIA…SGAKPGMRVK (107 aa)) folds into the tRNA-binding domain.

This sequence belongs to the class-I aminoacyl-tRNA synthetase family. MetG type 1 subfamily. As to quaternary structure, homodimer. Zn(2+) serves as cofactor.

It localises to the cytoplasm. It catalyses the reaction tRNA(Met) + L-methionine + ATP = L-methionyl-tRNA(Met) + AMP + diphosphate. Its function is as follows. Is required not only for elongation of protein synthesis but also for the initiation of all mRNA translation through initiator tRNA(fMet) aminoacylation. This chain is Methionine--tRNA ligase, found in Burkholderia vietnamiensis (strain G4 / LMG 22486) (Burkholderia cepacia (strain R1808)).